The chain runs to 88 residues: HssA/B-like protein 19 (88 aa).

This sequence belongs to the hssA/B family.

In Dictyostelium discoideum (Social amoeba), this protein is HssA/B-like protein 19 (hssl19).